Reading from the N-terminus, the 360-residue chain is Protein Wnt-2 (360 aa).

The N-terminal stretch at M1–L37 is a signal peptide. 11 cysteine pairs are disulfide-bonded: C80/C91, C130/C138, C140/C158, C213/C227, C215/C222, C289/C320, C305/C315, C319/C359, C335/C350, C337/C347, and C342/C343. N90 is a glycosylation site (N-linked (GlcNAc...) asparagine). S219 carries O-palmitoleoyl serine; by mom-1 lipidation. N352 carries N-linked (GlcNAc...) asparagine glycosylation.

The protein belongs to the Wnt family. In terms of processing, palmitoleoylation is required for efficient binding to frizzled receptors. Depalmitoleoylation leads to Wnt signaling pathway inhibition. Expressed in intestine, pharynx, anterior body wall muscle, vulva, some pharyngeal neurons and SMD head neurons. Expressed along the boundary between the intestine and muscle or hypodermis, but is also expressed in the hypodermis in cells including seam cells.

The protein resides in the secreted. It localises to the extracellular space. The protein localises to the extracellular matrix. Functionally, ligand for members of the frizzled family of seven transmembrane receptors. Probable developmental protein. May be a signaling molecule which affects the development of discrete regions of tissues. Is likely to signal over only few cell diameters. Involved in the correct positioning of the developing nerve ring and in axon guidance of SIA and SIB neurons, probably by binding to tyrosine kinase receptor cam-1. In addition, regulates the positioning of some head neuronal cells, muscle arms associated with the nerve ring and the excretory pore. Together with Wnt ligand cwn-1, regulates the migration of CAN, ALM, BDU and HSN neurons during embryogenesis, the migration of QL and QR neuroblast descendants during larval development, and polarity of ALM neurons. May act through the wnt receptor cfz-2 to regulate QR neuroblast descendant migration, and to direct ALM migration. Also plays a role in axon growth and guidance in HSN and male CP neurons. In addition, together with wnt ligand cwn-1, negatively regulates developmental neurite pruning of AIM neurons probably by acting as a ligand for receptor tyrosine kinase cam-1. Through the cam-1 receptor also probably regulates the outgrowth of neurites from RME GABAergic motor neurons. May act redundantly with other Wnt ligands such as cwn-1 and mom-2 to control seam cell polarity. The sequence is that of Protein Wnt-2 from Caenorhabditis elegans.